A 130-amino-acid chain; its full sequence is Small ribosomal subunit protein uS13 (130 aa).

Residues 97-116 show a composition bias toward basic residues; that stretch reads PVRGQRTKTNARTRRGKRKT. The segment at 97 to 130 is disordered; that stretch reads PVRGQRTKTNARTRRGKRKTVGAGKSTSSIKRVK. Over residues 121–130 the composition is skewed to polar residues; the sequence is KSTSSIKRVK.

It belongs to the universal ribosomal protein uS13 family. In terms of assembly, part of the 30S ribosomal subunit. Forms a loose heterodimer with protein S19. Forms two bridges to the 50S subunit in the 70S ribosome.

Its function is as follows. Located at the top of the head of the 30S subunit, it contacts several helices of the 16S rRNA. In the 70S ribosome it contacts the 23S rRNA (bridge B1a) and protein L5 of the 50S subunit (bridge B1b), connecting the 2 subunits; these bridges are implicated in subunit movement. Contacts the tRNAs in the A and P-sites. The chain is Small ribosomal subunit protein uS13 from Endomicrobium trichonymphae.